We begin with the raw amino-acid sequence, 406 residues long: Vacuole membrane protein 1 (406 aa).

N-acetylalanine is present on Ala-2. At 2-43 (AENGQNCDQRRVAMNKEQYNGNFTDPSSVNEKKRRDREERQN) the chain is on the cytoplasmic side. Residues 44 to 63 (IVLWRQPLITLQYFSLETLV) form a helical membrane-spanning segment. Residues 64–77 (ILKEWTSKLWHRQS) lie on the Extracellular side of the membrane. A helical transmembrane segment spans residues 78-98 (IVVSFLLLLAVLTATYYVEGA). Residues 99-109 (HQQYVQRIEKQ) lie on the Cytoplasmic side of the membrane. A helical transmembrane segment spans residues 110–130 (FLLYAYWIGLGILSSVGLGTG). Over 131–250 (LHTFLLYLGP…ASRAKLAVQN (120 aa)) the chain is Extracellular. A VTT domain region spans residues 173–316 (GTEGTISLWS…FVIVAFSKHI (144 aa)). The helical transmembrane segment at 251–271 (LVQKVGFFGILACASIPNPLF) threads the bilayer. Residues 272 to 273 (DL) are Cytoplasmic-facing. The chain crosses the membrane as a helical span at residues 274 to 294 (AGITCGHFLVPFWTFFGATLI). The Extracellular portion of the chain corresponds to 295–306 (GKAIIKMHIQKL). The helical transmembrane segment at 307-327 (FVIVAFSKHIVEQMVAFIGAV) threads the bilayer. The Cytoplasmic portion of the chain corresponds to 328–363 (PGIGPSLQKPFQEYLEAQRQKLHHRSEMGTPQGENW). The chain crosses the membrane as a helical span at residues 364 to 384 (LSWMFEKLVVVMVCYFILSII). Residues 385–406 (NSMAQSYAKRIQQRLDPKEKTK) are Extracellular-facing.

It belongs to the VMP1 family. As to quaternary structure, interacts with BECN1. Interacts with TJP1. Interacts with TP53INP2. Interacts with TMEM41B. Interacts with ATP2A2, PLN and SLN; competes with PLN and SLN to prevent them from forming an inhibitory complex with ATP2A2. Interacts with ATG2A.

It is found in the endoplasmic reticulum-Golgi intermediate compartment membrane. It localises to the cell membrane. The protein localises to the vacuole membrane. The protein resides in the endoplasmic reticulum membrane. It carries out the reaction a 1,2-diacyl-sn-glycero-3-phospho-L-serine(in) = a 1,2-diacyl-sn-glycero-3-phospho-L-serine(out). It catalyses the reaction cholesterol(in) = cholesterol(out). The catalysed reaction is a 1,2-diacyl-sn-glycero-3-phosphocholine(in) = a 1,2-diacyl-sn-glycero-3-phosphocholine(out). The enzyme catalyses a 1,2-diacyl-sn-glycero-3-phosphoethanolamine(in) = a 1,2-diacyl-sn-glycero-3-phosphoethanolamine(out). Its function is as follows. Phospholipid scramblase involved in lipid homeostasis and membrane dynamics processes. Has phospholipid scramblase activity toward cholesterol and phosphatidylserine, as well as phosphatidylethanolamine and phosphatidylcholine. Required for autophagosome formation: participates in early stages of autophagosome biogenesis at the endoplasmic reticulum (ER) membrane by reequilibrating the leaflets of the ER as lipids are extracted by ATG2 (ATG2A or ATG2B) to mediate autophagosome assembly. Regulates ATP2A2 activity to control ER-isolation membrane contacts for autophagosome formation. In addition to autophagy, involved in other processes in which phospholipid scramblase activity is required. Modulates ER contacts with lipid droplets, mitochondria and endosomes. Plays an essential role in formation of cell junctions. Upon stress such as bacterial and viral infection, promotes formation of cytoplasmic vacuoles followed by cell death. Involved in the cytoplasmic vacuolization of acinar cells during the early stage of acute pancreatitis. The chain is Vacuole membrane protein 1 from Bos taurus (Bovine).